The primary structure comprises 703 residues: Polyribonucleotide nucleotidyltransferase (703 aa).

Positions 485 and 491 each coordinate Mg(2+). Positions P552–I611 constitute a KH domain. The S1 motif domain occupies G621–K689.

Belongs to the polyribonucleotide nucleotidyltransferase family. Mg(2+) serves as cofactor.

It is found in the cytoplasm. The enzyme catalyses RNA(n+1) + phosphate = RNA(n) + a ribonucleoside 5'-diphosphate. Involved in mRNA degradation. Catalyzes the phosphorolysis of single-stranded polyribonucleotides processively in the 3'- to 5'-direction. In Clostridium acetobutylicum (strain ATCC 824 / DSM 792 / JCM 1419 / IAM 19013 / LMG 5710 / NBRC 13948 / NRRL B-527 / VKM B-1787 / 2291 / W), this protein is Polyribonucleotide nucleotidyltransferase.